Consider the following 409-residue polypeptide: Elongation factor 1-gamma (409 aa).

Residues 2–81 form the GST N-terminal domain; that stretch reads SVGTVYGKIG…YLASLNKTRA (80 aa). One can recognise a GST C-terminal domain in the interval 86-212; sequence TAEEKAKVLQ…EPLKFIDQPL (127 aa). Residues 219 to 248 are compositionally biased toward basic and acidic residues; sequence NKEAAPAKKAEKKKDEKKKNAPKPQAERPA. The interval 219–261 is disordered; it reads NKEAAPAKKAEKKKDEKKKNAPKPQAERPAKPPKHPLASAPNG. The region spanning 251–409 is the EF-1-gamma C-terminal domain; it reads PKHPLASAPN…REVADGKVCK (159 aa).

In terms of assembly, EF-1 is composed of four subunits: alpha, beta, delta, and gamma.

Its function is as follows. Probably plays a role in anchoring the complex to other cellular components. The protein is Elongation factor 1-gamma (tef3) of Schizosaccharomyces pombe (strain 972 / ATCC 24843) (Fission yeast).